The chain runs to 292 residues: Homoserine kinase (292 aa).

81–91 (RPRSGLGSSGA) provides a ligand contact to ATP.

Belongs to the GHMP kinase family. Homoserine kinase subfamily.

It localises to the cytoplasm. The enzyme catalyses L-homoserine + ATP = O-phospho-L-homoserine + ADP + H(+). It participates in amino-acid biosynthesis; L-threonine biosynthesis; L-threonine from L-aspartate: step 4/5. Functionally, catalyzes the ATP-dependent phosphorylation of L-homoserine to L-homoserine phosphate. This is Homoserine kinase from Thermococcus gammatolerans (strain DSM 15229 / JCM 11827 / EJ3).